Consider the following 141-residue polypeptide: UPF0310 protein SSA_0254 (141 aa).

Belongs to the UPF0310 family.

This Streptococcus sanguinis (strain SK36) protein is UPF0310 protein SSA_0254.